The sequence spans 395 residues: Transcription termination/antitermination protein NusA (395 aa).

The S1 motif domain maps to 137-201 (NSVLMGQVIL…TKKGLLLELS (65 aa)). 2 consecutive KH domains span residues 243-291 (SHNA…TLAL) and 331-378 (KVRL…NESE).

The protein belongs to the NusA family. As to quaternary structure, monomer. Binds directly to the core enzyme of the DNA-dependent RNA polymerase and to nascent RNA.

The protein localises to the cytoplasm. In terms of biological role, participates in both transcription termination and antitermination. This Helicobacter pylori (strain ATCC 700392 / 26695) (Campylobacter pylori) protein is Transcription termination/antitermination protein NusA.